The chain runs to 806 residues: Facilitated trehalose transporter Tret1 (806 aa).

Disordered stretches follow at residues 1 to 34 and 48 to 138; these read MFGN…TTGT and LNST…HKNQ. The Cytoplasmic portion of the chain corresponds to 1–339; the sequence is MFGNEMDDTR…LEVYRPTTNP (339 aa). Residues 25–34 show a composition bias toward low complexity; that stretch reads GSLSTSTTGT. The chain crosses the membrane as a helical span at residues 340–360; that stretch reads IFIWTQVLAALSVSLGSMVVG. Residues 361 to 389 lie on the Extracellular side of the membrane; sequence FSSAYTSPALVSMKDRNITSFEVTDQSGS. N-linked (GlcNAc...) asparagine glycosylation occurs at asparagine 377. The helical transmembrane segment at 390 to 410 threads the bilayer; it reads WVGGIMPLAGLAGGILGGPLI. Residues 411-424 are Cytoplasmic-facing; the sequence is EYLGRKNTILATAT. Residues 425–445 form a helical membrane-spanning segment; the sequence is PFIISWLLIACATHVAMVLVG. Topologically, residues 446 to 447 are extracellular; sequence RA. The helical transmembrane segment at 448-468 threads the bilayer; sequence LSGFSVGVASLSLPVYLGETV. At 469–473 the chain is on the cytoplasmic side; it reads QPEVR. Residues 474-494 form a helical membrane-spanning segment; sequence GTLGLLPTAFGNIGILLCFVA. Topologically, residues 495–501 are extracellular; it reads GKYMDWS. The helical transmembrane segment at 502–522 threads the bilayer; it reads GLAFLGAALPIPFLLLMFLIP. The Cytoplasmic portion of the chain corresponds to 523-585; sequence ETPRWYVSRG…DLMKKANLKP (63 aa). A helical transmembrane segment spans residues 586–606; the sequence is LLISLGLMFFQQLSGINAVIF. At 607–622 the chain is on the extracellular side; the sequence is YTVQIFQDAGSTIDEN. The helical transmembrane segment at 623-643 threads the bilayer; sequence LCTIIVGVVNFIATFIATMLI. Residues 644–649 are Cytoplasmic-facing; it reads DRLGRK. A helical transmembrane segment spans residues 650–670; the sequence is MLLYISDVAMIITLMTLGGFF. Topologically, residues 671 to 681 are extracellular; sequence YVKNSGQDVSQ. A helical transmembrane segment spans residues 682–702; the sequence is VGWLPLAAFVIYVLGFSLGFG. Topologically, residues 703-723 are cytoplasmic; that stretch reads PIPWLMMGEILPGKIRGSAAS. The chain crosses the membrane as a helical span at residues 724 to 744; sequence VATAFNWSCTFIVTKTFADII. At 745–750 the chain is on the extracellular side; sequence NAIGTH. Residues 751–771 traverse the membrane as a helical segment; that stretch reads GTFWMFGSICVIGLAFVIFYV. Over 772–806 the chain is Cytoplasmic; sequence PETQGKSLEDIERKMMGRVRRMSSVANIKPLSFNM.

Belongs to the major facilitator superfamily. Sugar transporter (TC 2.A.1.1) family. Trehalose transporter subfamily.

Its subcellular location is the cell membrane. High-capacity facilitative transporter for trehalose. Does not transport maltose, sucrose or lactose. Mediates the bidirectional transfer of trehalose. Responsible for the transport of trehalose synthesized in the fat body and the incorporation of trehalose into other tissues that require a carbon source, thereby regulating trehalose levels in the hemolymph. The polypeptide is Facilitated trehalose transporter Tret1 (Aedes aegypti (Yellowfever mosquito)).